The sequence spans 281 residues: Bis(5'-nucleosyl)-tetraphosphatase, symmetrical (281 aa).

The protein belongs to the Ap4A hydrolase family.

The catalysed reaction is P(1),P(4)-bis(5'-adenosyl) tetraphosphate + H2O = 2 ADP + 2 H(+). Hydrolyzes diadenosine 5',5'''-P1,P4-tetraphosphate to yield ADP. The sequence is that of Bis(5'-nucleosyl)-tetraphosphatase, symmetrical from Delftia acidovorans (strain DSM 14801 / SPH-1).